A 427-amino-acid chain; its full sequence is Enolase (427 aa).

(2R)-2-phosphoglycerate is bound at residue glutamine 163. Catalysis depends on glutamate 205, which acts as the Proton donor. Mg(2+)-binding residues include aspartate 242, glutamate 285, and aspartate 312. Residues lysine 337, arginine 366, serine 367, and lysine 388 each coordinate (2R)-2-phosphoglycerate. The active-site Proton acceptor is the lysine 337.

Belongs to the enolase family. It depends on Mg(2+) as a cofactor.

The protein localises to the cytoplasm. It localises to the secreted. The protein resides in the cell surface. It catalyses the reaction (2R)-2-phosphoglycerate = phosphoenolpyruvate + H2O. Its pathway is carbohydrate degradation; glycolysis; pyruvate from D-glyceraldehyde 3-phosphate: step 4/5. Catalyzes the reversible conversion of 2-phosphoglycerate (2-PG) into phosphoenolpyruvate (PEP). It is essential for the degradation of carbohydrates via glycolysis. This chain is Enolase, found in Burkholderia thailandensis (strain ATCC 700388 / DSM 13276 / CCUG 48851 / CIP 106301 / E264).